Here is a 268-residue protein sequence, read N- to C-terminus: Thiazole synthase (268 aa).

Lysine 108 acts as the Schiff-base intermediate with DXP in catalysis. 1-deoxy-D-xylulose 5-phosphate is bound by residues glycine 169, alanine 195–glycine 196, and asparagine 217–serine 218. The tract at residues arginine 248–asparagine 268 is disordered. Residues alanine 255–asparagine 268 show a composition bias toward polar residues.

The protein belongs to the ThiG family. In terms of assembly, homotetramer. Forms heterodimers with either ThiH or ThiS.

Its subcellular location is the cytoplasm. It catalyses the reaction [ThiS sulfur-carrier protein]-C-terminal-Gly-aminoethanethioate + 2-iminoacetate + 1-deoxy-D-xylulose 5-phosphate = [ThiS sulfur-carrier protein]-C-terminal Gly-Gly + 2-[(2R,5Z)-2-carboxy-4-methylthiazol-5(2H)-ylidene]ethyl phosphate + 2 H2O + H(+). Its pathway is cofactor biosynthesis; thiamine diphosphate biosynthesis. Functionally, catalyzes the rearrangement of 1-deoxy-D-xylulose 5-phosphate (DXP) to produce the thiazole phosphate moiety of thiamine. Sulfur is provided by the thiocarboxylate moiety of the carrier protein ThiS. In vitro, sulfur can be provided by H(2)S. The protein is Thiazole synthase of Prochlorococcus marinus (strain NATL2A).